A 212-amino-acid polypeptide reads, in one-letter code: uncharacterized protein (212 aa).

The N-terminal stretch at 1-21 (MRRLTAFGLALLLLASGVARG) is a signal peptide.

It to E.coli YfaT and T.maritima TM0986.

This is an uncharacterized protein from Pseudomonas aeruginosa (strain ATCC 15692 / DSM 22644 / CIP 104116 / JCM 14847 / LMG 12228 / 1C / PRS 101 / PAO1).